The following is a 194-amino-acid chain: Potassium-transporting ATPase KdpC subunit (194 aa).

The chain crosses the membrane as a helical span at residues 12–34 (LFLLLLTGGVYPLLTTALGQWWF).

It belongs to the KdpC family. As to quaternary structure, the system is composed of three essential subunits: KdpA, KdpB and KdpC.

The protein resides in the cell inner membrane. Its function is as follows. Part of the high-affinity ATP-driven potassium transport (or Kdp) system, which catalyzes the hydrolysis of ATP coupled with the electrogenic transport of potassium into the cytoplasm. This subunit acts as a catalytic chaperone that increases the ATP-binding affinity of the ATP-hydrolyzing subunit KdpB by the formation of a transient KdpB/KdpC/ATP ternary complex. This Salmonella choleraesuis (strain SC-B67) protein is Potassium-transporting ATPase KdpC subunit.